The sequence spans 361 residues: N-methyltransferase benX (361 aa).

Belongs to the methyltransferase superfamily.

It participates in secondary metabolite biosynthesis. N-methyltransferase; part of the gene cluster that mediates the biosynthesis of benzomalvin A and D. The pathway begins with the loading of amino acid precursors onto the A domains of the non ribosomal peptide synthetases benY and benZ. BenY and the A1 domain of benZ are loaded with anthranilate (Anth), while the A2 domain of benZ is loaded with phenylalanine (Phe). N-methylation of Phe by the methyltransferase benX may happen before loading of Phe onto benZ, after loading of Phe, or after dipeptide formation. Condensation of Anth with the secondary amine of NmPhe or Phe is catalyzed by the C1 domain of benZ, forming a dipeptide intermediate. This is followed by in trans condensation of the Anth-NmPhe dipeptide with Anth bound to the T domain of benY by the C2 domain of benZ to form the linear tripeptide Anth-NmPhe-Anth. Cyclization and release of the tripeptide is then catalyzed by the C-terminal C domain of benY and the resulting 11-member macrocyclic intermediate is expected to spontaneously collapse to form the benzodiazepine core. Benzomalvin A is in conformational equilibrium with its atropisomer, benzomalvin D. This Aspergillus terreus protein is N-methyltransferase benX.